A 1147-amino-acid chain; its full sequence is Nucleolar protein 6 (1147 aa).

A disordered region spans residues 1–49; that stretch reads MQKKRSRAGAAEQEAASDDGEMSDSSDKMEVSQNKGKSGIKRAPEADDV. Over residues 15–24 the composition is skewed to acidic residues; that stretch reads AASDDGEMSD.

Belongs to the NRAP family. As to quaternary structure, part of the small subunit (SSU) processome, composed of more than 70 proteins and the RNA chaperone small nucleolar RNA (snoRNA) U3.

It localises to the nucleus. The protein localises to the nucleolus. It is found in the chromosome. Its function is as follows. Part of the small subunit (SSU) processome, first precursor of the small eukaryotic ribosomal subunit. During the assembly of the SSU processome in the nucleolus, many ribosome biogenesis factors, an RNA chaperone and ribosomal proteins associate with the nascent pre-rRNA and work in concert to generate RNA folding, modifications, rearrangements and cleavage as well as targeted degradation of pre-ribosomal RNA by the RNA exosome. This is Nucleolar protein 6 (nol6) from Xenopus laevis (African clawed frog).